A 177-amino-acid chain; its full sequence is Large ribosomal subunit protein uL5 (177 aa).

The protein belongs to the universal ribosomal protein uL5 family. Part of the 50S ribosomal subunit; part of the 5S rRNA/L5/L18/L25 subcomplex. Contacts the 5S rRNA and the P site tRNA. Forms a bridge to the 30S subunit in the 70S ribosome.

This is one of the proteins that bind and probably mediate the attachment of the 5S RNA into the large ribosomal subunit, where it forms part of the central protuberance. In the 70S ribosome it contacts protein S13 of the 30S subunit (bridge B1b), connecting the 2 subunits; this bridge is implicated in subunit movement. Contacts the P site tRNA; the 5S rRNA and some of its associated proteins might help stabilize positioning of ribosome-bound tRNAs. This chain is Large ribosomal subunit protein uL5, found in Ehrlichia chaffeensis (strain ATCC CRL-10679 / Arkansas).